We begin with the raw amino-acid sequence, 94 residues long: Mitochondrial import inner membrane translocase subunit Tim8 A (94 aa).

Positions cysteine 47–cysteine 70 match the Twin CX3C motif motif. Cystine bridges form between cysteine 47-cysteine 70 and cysteine 51-cysteine 66.

It belongs to the small Tim family. Heterohexamer; composed of 3 copies of TIMM8A and 3 copies of TIMM13, named soluble 70 kDa complex. Associates with the TIM22 complex, whose core is composed of TIMM22.

Its subcellular location is the mitochondrion inner membrane. Mitochondrial intermembrane chaperone that participates in the import and insertion of some multi-pass transmembrane proteins into the mitochondrial inner membrane. Also required for the transfer of beta-barrel precursors from the TOM complex to the sorting and assembly machinery (SAM complex) of the outer membrane. Acts as a chaperone-like protein that protects the hydrophobic precursors from aggregation and guide them through the mitochondrial intermembrane space. The TIMM8-TIMM13 complex mediates the import of some proteins while the predominant TIMM9-TIMM10 70 kDa complex mediates the import of much more proteins. This is Mitochondrial import inner membrane translocase subunit Tim8 A (timm8a) from Xenopus laevis (African clawed frog).